A 272-amino-acid polypeptide reads, in one-letter code: Ribonuclease HII (272 aa).

Residues 87-272 enclose the RNase H type-2 domain; sequence KYVAGVDEVG…HRMSFLKNIL (186 aa). Residues Asp-93, Glu-94, and Asp-188 each contribute to the a divalent metal cation site.

The protein belongs to the RNase HII family. Mn(2+) is required as a cofactor. Mg(2+) serves as cofactor.

It is found in the cytoplasm. The catalysed reaction is Endonucleolytic cleavage to 5'-phosphomonoester.. In terms of biological role, endonuclease that specifically degrades the RNA of RNA-DNA hybrids. The protein is Ribonuclease HII of Clostridium perfringens (strain 13 / Type A).